The chain runs to 158 residues: GTP-dependent dephospho-CoA kinase (158 aa).

Residues Asp35, Val36, Asp54, Lys56, Glu109, and Asp132 each contribute to the GTP site.

The protein belongs to the GTP-dependent DPCK family.

The catalysed reaction is 3'-dephospho-CoA + GTP = GDP + CoA + H(+). It functions in the pathway cofactor biosynthesis; coenzyme A biosynthesis. In terms of biological role, catalyzes the GTP-dependent phosphorylation of the 3'-hydroxyl group of dephosphocoenzyme A to form coenzyme A (CoA). This is GTP-dependent dephospho-CoA kinase from Methanococcus maripaludis (strain C7 / ATCC BAA-1331).